A 254-amino-acid chain; its full sequence is NAD-dependent protein deacylase (254 aa).

In terms of domain architecture, Deacetylase sirtuin-type spans 1 to 250 (MERLEEARKR…LPPSPEDQAE (250 aa)). NAD(+) is bound at residue 22–41 (GAGISKPSGIPTFRDAEGLW). Substrate contacts are provided by tyrosine 66 and arginine 69. An NAD(+)-binding site is contributed by 104 to 107 (QNVD). The active-site Proton acceptor is histidine 122. Residues cysteine 130, cysteine 133, cysteine 149, and cysteine 152 each contribute to the Zn(2+) site. NAD(+) is bound by residues 189-191 (GTS), 215-217 (NPE), and alanine 233.

Belongs to the sirtuin family. Class III subfamily. Requires Zn(2+) as cofactor.

Its subcellular location is the cytoplasm. It catalyses the reaction N(6)-acetyl-L-lysyl-[protein] + NAD(+) + H2O = 2''-O-acetyl-ADP-D-ribose + nicotinamide + L-lysyl-[protein]. It carries out the reaction N(6)-succinyl-L-lysyl-[protein] + NAD(+) + H2O = 2''-O-succinyl-ADP-D-ribose + nicotinamide + L-lysyl-[protein]. Functionally, NAD-dependent lysine deacetylase and desuccinylase that specifically removes acetyl and succinyl groups on target proteins. Modulates the activities of several proteins which are inactive in their acylated form. The sequence is that of NAD-dependent protein deacylase from Thermus thermophilus (strain ATCC BAA-163 / DSM 7039 / HB27).